Consider the following 773-residue polypeptide: MNLFLSRFTGLRNTSFLGHARPFMFPRRYAHSLVAHNIGHIKLDPNEGLFFVDNLVNTPTYFYIQRYTALLFQNNLKKQLSAAFPSSDTMQLEDIIFRWQDGGAFLKVRYKEFPQDTEAVSEHVRESFRKRPVRTILHPFSTPIPHMVHGIPWLQDLYIFPSRTVDVNFEGPPLSQERLYSIFRTYGKLRSVTINSPTSATLSFSSLRSATSALNCMHGFVYGKTEFHMRYRHMNRFVAFKDWLFSHPRFTIPLVAAAITVLTASLFDPIRKFFVETNIVHGQKLRNINVVGWVKKKTRDIVLSPFHENGTNIKAPIWTTREKDCEQLKEWLDEALHSFIVVQGPRGSGKRDLVDRVVKERKNVLFFDCDRLFSTTNTEMFVSTLASQTGYFPLFSFLNNISSLIDMAAQGLIGQKTGIVSSSEGQVRQILNTTQTVLRSLALREHKEADTSVLDESEFLEVHADRLPVVILDNFQLRKLSNPMQRVVAEWAGNLVKEGIAHVLMLTPDVGGTKSLEQYVNGWENRTLLLGDADPVLAQRYVIESLPEEMQTEELRKELRVQLPKIGGRLRDLDYVARRLRVNSSSVSEAIGGIVSQNASDILQTFLRPASLTSEEKPTFTPEESWTLITYLSQHEYIPYHMLMLDPLFKGHDDAVRALEESELITITTVNARPDKVYAGKPVYVTAFRQLVNDPVLSANMQLVRCNALIGMANNAIKNDEQELQMLKDLGNLESGVKDRAHYLTTRIQKNQGVITDNEKSIERLTEALKKID.

The N-terminal 29 residues, 1–29, are a transit peptide targeting the mitochondrion; the sequence is MNLFLSRFTGLRNTSFLGHARPFMFPRRY. Over 30-249 the chain is Mitochondrial matrix; it reads AHSLVAHNIG…FKDWLFSHPR (220 aa). The region spanning 163–234 is the RRM domain; that stretch reads RTVDVNFEGP…TEFHMRYRHM (72 aa). The chain crosses the membrane as a helical span at residues 250-270; sequence FTIPLVAAAITVLTASLFDPI. At 271–773 the chain is on the mitochondrial intermembrane side; sequence RKFFVETNIV…RLTEALKKID (503 aa).

The protein belongs to the YME2 family.

The protein resides in the mitochondrion inner membrane. Functionally, plays a role in maintaining the mitochondrial genome and in controlling the mtDNA escape. Involved in the regulation of mtDNA nucleotide structure and number. May have a dispensable role in early maturation of pre-rRNA. This is Mitochondrial escape protein 2 (yme2) from Schizosaccharomyces pombe (strain 972 / ATCC 24843) (Fission yeast).